The sequence spans 131 residues: Profilin-10 (131 aa).

An intrachain disulfide couples Cys13 to Cys115. An Involved in PIP2 interaction motif is present at residues 81 to 97 (AVIRGKKGAGGITIKKT). The residue at position 111 (Thr111) is a Phosphothreonine.

It belongs to the profilin family. Occurs in many kinds of cells as a complex with monomeric actin in a 1:1 ratio. In terms of processing, phosphorylated by MAP kinases.

The protein resides in the cytoplasm. It localises to the cytoskeleton. Binds to actin and affects the structure of the cytoskeleton. At high concentrations, profilin prevents the polymerization of actin, whereas it enhances it at low concentrations. This is Profilin-10 from Phleum pratense (Common timothy).